A 320-amino-acid polypeptide reads, in one-letter code: Polyprenyl transferase pyr6 (320 aa).

The next 6 membrane-spanning stretches (helical) occupy residues 22 to 42 (KYNC…AAAS), 60 to 80 (GLAF…NDWI), 101 to 121 (LATR…VWLM), 127 to 147 (GQNL…YPFG), 155 to 175 (LGIY…LPAW), and 186 to 206 (PDLL…TIYF). The N-linked (GlcNAc...) asparagine glycan is linked to N224. The chain crosses the membrane as a helical span at residues 233–253 (YVHGLLLLQAVAVVMVIPWIL). N-linked (GlcNAc...) asparagine glycosylation occurs at N256. The next 2 membrane-spanning stretches (helical) occupy residues 260-280 (WLWF…LYLF) and 296-316 (FALG…VSGS).

This sequence belongs to the UbiA prenyltransferase family. The cofactor is Mg(2+).

The protein resides in the membrane. It catalyses the reaction 4-hydroxy-6-(pyridin-3-yl)-2H-pyran-2-one + (2E,6E)-farnesyl diphosphate = 4-hydroxy-3-[(2E,6E)-farnesyl]-6-(pyridin-3-yl)-2H-pyran-2-one + diphosphate. Its pathway is secondary metabolite biosynthesis; terpenoid biosynthesis. Its function is as follows. Polyprenyl transferase; part of the gene cluster that mediates the biosynthesis of pyripyropene A, a specific human acyl-coenzyme A:cholesterol acyltransferase 2 inhibitor. The first step of the pathway is the synthesis of nicotinyl-CoA from nicotinic acid by the nicotinic acid-CoA ligase pyr1. Nicotinyl-CoA is then a substrate of polyketide synthase pyr2 to produce 4-hydroxy-6-(3-pyridinyl)-2H-pyran-2-one (HPPO) which is further prenylated by the polyprenyl transferase pyr6 to yield farnesyl-HPPO. The next steps consist of an epoxidation of farnesyl-HPPO to epoxyfarnesyl-HPPO by FAD-dependent monooxygenase pyr5 and a cyclization of the terpenoid portion by the terpene cyclase pyr4 to yield deacetyl-pyripyropene E. The 2 cytochrome P450 monooxygenases pyr3 and pyr9, and the 2 acetyltransferases pyr7 and pyr8 are involved in the conversion of deacetyl-pyripyropene E into pyripyropene A through several cycles of oxidation and acetylation steps. Pyr7 acetylates deacetyl-pyripyropene E to pyripyropene E which is oxidized to 11-deacetyl-pyripyropene O by pyr3, which is in turn acetylated into pyripyropene O by pyr8. Pyripyropene O is then oxidized to deacetyl-pyripyropene A by pyr9. Deacetyl-pyripyropene A is finally acetylated to pyripyropene A by pyr8. The polypeptide is Polyprenyl transferase pyr6 (Aspergillus fumigatus (strain ATCC MYA-4609 / CBS 101355 / FGSC A1100 / Af293) (Neosartorya fumigata)).